The primary structure comprises 162 residues: Large ribosomal subunit protein uL15 (162 aa).

The tract at residues 1–44 (MKLNELRDNPGATKNRIRVGRGIGSGKGKTAGRGVKGQKSREGV) is disordered. The segment covering 21-35 (RGIGSGKGKTAGRGV) has biased composition (gly residues).

The protein belongs to the universal ribosomal protein uL15 family. As to quaternary structure, part of the 50S ribosomal subunit.

Binds to the 23S rRNA. This chain is Large ribosomal subunit protein uL15, found in Rhodospirillum rubrum (strain ATCC 11170 / ATH 1.1.1 / DSM 467 / LMG 4362 / NCIMB 8255 / S1).